Consider the following 270-residue polypeptide: Flavin-dependent thymidylate synthase (270 aa).

The 206-residue stretch at 13-218 (GFVRLVDQMG…PLAWAAFEEH (206 aa)) folds into the ThyX domain. Residues Ser59, 82–84 (RHR), and Glu90 contribute to the FAD site. DUMP is bound by residues 79–82 (QWFR), 90–94 (EISGR), and Arg157. The ThyX motif motif lies at 82 to 92 (RHRTASVNEIS). Residues 173–175 (DLH) and His179 contribute to the FAD site. Arg184 serves as a coordination point for dUMP. Arg184 serves as the catalytic Involved in ionization of N3 of dUMP, leading to its activation.

This sequence belongs to the thymidylate synthase ThyX family. As to quaternary structure, homotetramer. The cofactor is FAD.

The catalysed reaction is dUMP + (6R)-5,10-methylene-5,6,7,8-tetrahydrofolate + NADPH + H(+) = dTMP + (6S)-5,6,7,8-tetrahydrofolate + NADP(+). It participates in pyrimidine metabolism; dTTP biosynthesis. In terms of biological role, catalyzes the reductive methylation of 2'-deoxyuridine-5'-monophosphate (dUMP) to 2'-deoxythymidine-5'-monophosphate (dTMP) while utilizing 5,10-methylenetetrahydrofolate (mTHF) as the methyl donor, and NADPH and FADH(2) as the reductant. This chain is Flavin-dependent thymidylate synthase, found in Thermus thermophilus (strain ATCC BAA-163 / DSM 7039 / HB27).